The following is a 219-amino-acid chain: MAPFGRLYSFMPNGRVFKILAAATLNGLEIEITPYQHMVDNKTPEFRAKFPAGKVPAFEGADGLLLPESDAIAQYLAQSGPYSEQLLGRDAATSAKIRQWISFFDGEVYPHMLDLVIWRVGIAPFDQSTETKALARLEFALDVLEKHLDGRKWLVGDELTLADLTGASSLLWAFMHIIDASERKRFPSVVAWYLRTIETEEVKEVFGPPNLIDVKRVHE.

Positions 3 to 84 constitute a GST N-terminal domain; it reads PFGRLYSFMP…YLAQSGPYSE (82 aa). Residues 90–219 form the GST C-terminal domain; it reads DAATSAKIRQ…NLIDVKRVHE (130 aa).

The protein belongs to the GST superfamily.

In terms of biological role, glutathione S-transferase-like protein; part of the gene cluster that mediates the biosynthesis of the mycotoxin lucilactaene and the lucilactaene-related compound NG-391 that act as cell cycle inhibitors with potent growth inhibitory activity against malarial parasites, moderate growth inhibitory activity against cancer cells, and no activity against bacteria and fungi. Within the cluster, LUC7 and LUC8 encode proteins which are not commonly involved in the biosynthesis of secondary metabolites and are not essential for lucilactaene biosynthesis. The protein is Glutathione S-transferase-like protein LUC7 of Fusarium sp.